The chain runs to 487 residues: MNTQQLAKLRSFVPEMRKVRHIHFVGIGGAGMGGIAEVLANEGYAISGSDLAPNVVTQQLVALGATIYFNHRPENIRDASVVVVSTAISADNPEIIAAREARIPVIRRAEMLAELMRYRHGVAIAGTHGKTTTTAMISNIYAQAGLDPTFVNGGLVKSAGTHARLGCSRYLIAEADESDASFLHLQPMVAVVTNIEADHMDTYHGNFDNLKETFITFLHNLPFYGRAVMCIDDDVIRSIIPKVGRYITTYGFSEDADVRITHYEQKGAQGFFTISREDMPDLDVVLNAPGRHNALNATAAVAVATEEGIADEHILAALLNFQGTGRRFDFLGNFSLEHVNGQEGEVMLVDDYGHHPTEVDATIKAARAGWPDKRLVMLFQPHRYTRTRDLYEDFATVLNQVDILLLTDVYAAGEAPIPGADSRSLCRTIRQRGKLDPIWVSDVENISSILAGVLTDNDLVLVQGAGNIGKIARRLAETKLQPSLSED.

G126–T132 lines the ATP pocket.

It belongs to the MurCDEF family.

The protein resides in the cytoplasm. It carries out the reaction UDP-N-acetyl-alpha-D-muramate + L-alanine + ATP = UDP-N-acetyl-alpha-D-muramoyl-L-alanine + ADP + phosphate + H(+). It functions in the pathway cell wall biogenesis; peptidoglycan biosynthesis. In terms of biological role, cell wall formation. In Proteus mirabilis (strain HI4320), this protein is UDP-N-acetylmuramate--L-alanine ligase.